Reading from the N-terminus, the 364-residue chain is Mitogen-activated protein kinase 11 (364 aa).

The Protein kinase domain maps to 24–308; it reads LQGLRPVGSG…AAEALAHAYF (285 aa). ATP-binding positions include 30–38 and Lys-53; that span reads VGSGAYGSV. Glu-71 serves as a coordination point for nilotinib. The Proton acceptor role is filled by Asp-168. At Thr-180 the chain carries Phosphothreonine; by MAP2K3, MAP2K4 and MAP2K6. The TXY motif lies at 180 to 182; sequence TGY. Position 182 is a phosphotyrosine; by MAP2K3, MAP2K4 and MAP2K6 (Tyr-182). The interval 312 to 331 is disordered; sequence HDPDDEPEAEPYDESVEAKE. Positions 314–326 are enriched in acidic residues; the sequence is PDDEPEAEPYDES. The residue at position 323 (Tyr-323) is a Phosphotyrosine; by ZAP70.

Belongs to the protein kinase superfamily. CMGC Ser/Thr protein kinase family. MAP kinase subfamily. As to quaternary structure, interacts with HDAC3 and DUSP16. Requires Mg(2+) as cofactor. Dually phosphorylated on Thr-180 and Tyr-182 by MAP2K3/MKK3, MAP2K4/MKK4 and MAP2K6/MKK6, which activates the enzyme.

Its subcellular location is the cytoplasm. The protein localises to the nucleus. The enzyme catalyses L-seryl-[protein] + ATP = O-phospho-L-seryl-[protein] + ADP + H(+). It catalyses the reaction L-threonyl-[protein] + ATP = O-phospho-L-threonyl-[protein] + ADP + H(+). Activated by phosphorylation on threonine and tyrosine by MAP2K3/MKK3, MAP2K4/MKK4 and MAP2K6/MKK6. MAP2K3/MKK3 and MAP2K6/MKK6 are both essential for the activation of MAPK11 induced by environmental stress. HDAC3 interacts directly and selectively with MAPK11 to repress ATF2 transcriptional activity, and regulate TNF gene expression in LPS-stimulated cells. Inhibited by SB203580 and pyridinyl-imidazole related compounds. Serine/threonine kinase which acts as an essential component of the MAP kinase signal transduction pathway. MAPK11 is one of the four p38 MAPKs which play an important role in the cascades of cellular responses evoked by extracellular stimuli such as pro-inflammatory cytokines or physical stress leading to direct activation of transcription factors. Accordingly, p38 MAPKs phosphorylate a broad range of proteins and it has been estimated that they may have approximately 200 to 300 substrates each. MAPK11 functions are mostly redundant with those of MAPK14. Some of the targets are downstream kinases which are activated through phosphorylation and further phosphorylate additional targets. RPS6KA5/MSK1 and RPS6KA4/MSK2 can directly phosphorylate and activate transcription factors such as CREB1, ATF1, the NF-kappa-B isoform RELA/NFKB3, STAT1 and STAT3, but can also phosphorylate histone H3 and the nucleosomal protein HMGN1. RPS6KA5/MSK1 and RPS6KA4/MSK2 play important roles in the rapid induction of immediate-early genes in response to stress or mitogenic stimuli, either by inducing chromatin remodeling or by recruiting the transcription machinery. On the other hand, two other kinase targets, MAPKAPK2/MK2 and MAPKAPK3/MK3, participate in the control of gene expression mostly at the post-transcriptional level, by phosphorylating ZFP36 (tristetraprolin) and ELAVL1, and by regulating EEF2K, which is important for the elongation of mRNA during translation. MKNK1/MNK1 and MKNK2/MNK2, two other kinases activated by p38 MAPKs, regulate protein synthesis by phosphorylating the initiation factor EIF4E2. In the cytoplasm, the p38 MAPK pathway is an important regulator of protein turnover. For example, CFLAR is an inhibitor of TNF-induced apoptosis whose proteasome-mediated degradation is regulated by p38 MAPK phosphorylation. Ectodomain shedding of transmembrane proteins is regulated by p38 MAPKs as well. In response to inflammatory stimuli, p38 MAPKs phosphorylate the membrane-associated metalloprotease ADAM17. Such phosphorylation is required for ADAM17-mediated ectodomain shedding of TGF-alpha family ligands, which results in the activation of EGFR signaling and cell proliferation. Additional examples of p38 MAPK substrates are the FGFR1. FGFR1 can be translocated from the extracellular space into the cytosol and nucleus of target cells, and regulates processes such as rRNA synthesis and cell growth. FGFR1 translocation requires p38 MAPK activation. In the nucleus, many transcription factors are phosphorylated and activated by p38 MAPKs in response to different stimuli. Classical examples include ATF1, ATF2, ATF6, ELK1, PTPRH, DDIT3, TP53/p53 and MEF2C and MEF2A. The p38 MAPKs are emerging as important modulators of gene expression by regulating chromatin modifiers and remodelers. The promoters of several genes involved in the inflammatory response, such as IL6, IL8 and IL12B, display a p38 MAPK-dependent enrichment of histone H3 phosphorylation on 'Ser-10' (H3S10ph) in LPS-stimulated myeloid cells. This phosphorylation enhances the accessibility of the cryptic NF-kappa-B-binding sites marking promoters for increased NF-kappa-B recruitment. Phosphorylates methyltransferase DOT1L on 'Ser-834', 'Thr-900', 'Ser-902', 'Thr-984', 'Ser-1001', 'Ser-1009' and 'Ser-1104'. This is Mitogen-activated protein kinase 11 (Mapk11) from Mus musculus (Mouse).